The following is a 178-amino-acid chain: MDKKTQAVTEIYAKSLVEVALERDSVPIIYDEVRAILSVLDDQQVQDFLASKAIDLSAKSEVVRLFQESCSNYMKQFLEIILQNERQQLLYLIMKEVLKELSLKTHIFDIEVTTAVALSDDQKERLTALVEKKFALTKRNLIEKIDDEIIGGFIIKANNKVIDTSIRSQLQELKMNLK.

It belongs to the ATPase delta chain family. F-type ATPases have 2 components, F(1) - the catalytic core - and F(0) - the membrane proton channel. F(1) has five subunits: alpha(3), beta(3), gamma(1), delta(1), epsilon(1). F(0) has three main subunits: a(1), b(2) and c(10-14). The alpha and beta chains form an alternating ring which encloses part of the gamma chain. F(1) is attached to F(0) by a central stalk formed by the gamma and epsilon chains, while a peripheral stalk is formed by the delta and b chains.

It is found in the cell membrane. Its function is as follows. F(1)F(0) ATP synthase produces ATP from ADP in the presence of a proton or sodium gradient. F-type ATPases consist of two structural domains, F(1) containing the extramembraneous catalytic core and F(0) containing the membrane proton channel, linked together by a central stalk and a peripheral stalk. During catalysis, ATP synthesis in the catalytic domain of F(1) is coupled via a rotary mechanism of the central stalk subunits to proton translocation. This protein is part of the stalk that links CF(0) to CF(1). It either transmits conformational changes from CF(0) to CF(1) or is implicated in proton conduction. The chain is ATP synthase subunit delta from Streptococcus mutans serotype c (strain ATCC 700610 / UA159).